The sequence spans 795 residues: Copper-exporting P-type ATPase (795 aa).

2 HMA domains span residues 5–70 (QNAT…YDVV) and 72–138 (DKAE…YDAQ). Cu(+) contacts are provided by Cys16, Cys19, Cys83, and Cys86. A run of 6 helical transmembrane segments spans residues 161-181 (LMISTILSLPLLMTMLVHLFN), 187-207 (ILMNPWFQFILATPIQFIIGW), 224-244 (MDVLVALGTSAAYFYSIYEMI), 256-276 (LYFETSAVLITLILFGKYLEA), 412-432 (YFVPIVIAIALLTFLIWITLV), and 440-460 (ALVAAISVLVIACPCALGLAT). Asp496 (4-aspartylphosphate intermediate) is an active-site residue. Mg(2+)-binding residues include Asp690 and Asp694. Helical transmembrane passes span 747-764 (NLFWAFGYNIAGIPIAAM) and 770-788 (WIAGAAMALSSVSVVSNAL).

Belongs to the cation transport ATPase (P-type) (TC 3.A.3) family. Type IB subfamily.

The protein resides in the cell membrane. The enzyme catalyses Cu(+)(in) + ATP + H2O = Cu(+)(out) + ADP + phosphate + H(+). Functionally, involved in copper export. This Staphylococcus haemolyticus (strain JCSC1435) protein is Copper-exporting P-type ATPase (copA).